A 359-amino-acid polypeptide reads, in one-letter code: D-alanine--D-alanine ligase (359 aa).

In terms of domain architecture, ATP-grasp spans 141-346 (KRIFKEAGLP…YSTLLDELIN (206 aa)). 172–227 (IEHLGYPCFVKPANLGSSVGITKVHNEEELPGALKLAAKYDRKLLIERGIDAREIE) contributes to the ATP binding site. Mg(2+) contacts are provided by Asp299, Glu313, and Asn315.

The protein belongs to the D-alanine--D-alanine ligase family. Mg(2+) serves as cofactor. The cofactor is Mn(2+).

It is found in the cytoplasm. The enzyme catalyses 2 D-alanine + ATP = D-alanyl-D-alanine + ADP + phosphate + H(+). It functions in the pathway cell wall biogenesis; peptidoglycan biosynthesis. Cell wall formation. The protein is D-alanine--D-alanine ligase of Thermoanaerobacter pseudethanolicus (strain ATCC 33223 / 39E) (Clostridium thermohydrosulfuricum).